The chain runs to 147 residues: Lysozyme C (147 aa).

An N-terminal signal peptide occupies residues 1-18; the sequence is MRSLLVLVLCFLPLAALG. Residues 19–147 enclose the C-type lysozyme domain; that stretch reads KVYGRCELAA…VNAWIRGCRL (129 aa). 4 disulfide bridges follow: cysteine 24-cysteine 145, cysteine 48-cysteine 133, cysteine 82-cysteine 98, and cysteine 94-cysteine 112. Active-site residues include glutamate 53 and aspartate 70.

The protein belongs to the glycosyl hydrolase 22 family. In terms of assembly, monomer.

It localises to the secreted. The catalysed reaction is Hydrolysis of (1-&gt;4)-beta-linkages between N-acetylmuramic acid and N-acetyl-D-glucosamine residues in a peptidoglycan and between N-acetyl-D-glucosamine residues in chitodextrins.. In terms of biological role, lysozymes have primarily a bacteriolytic function; those in tissues and body fluids are associated with the monocyte-macrophage system and enhance the activity of immunoagents. This chain is Lysozyme C (LYZ), found in Coturnix japonica (Japanese quail).